A 434-amino-acid chain; its full sequence is Nicotinate phosphoribosyltransferase (434 aa).

H242 bears the Phosphohistidine; by autocatalysis mark.

Belongs to the NAPRTase family. Transiently phosphorylated on a His residue during the reaction cycle. Phosphorylation strongly increases the affinity for substrates and increases the rate of nicotinate D-ribonucleotide production. Dephosphorylation regenerates the low-affinity form of the enzyme, leading to product release.

It catalyses the reaction nicotinate + 5-phospho-alpha-D-ribose 1-diphosphate + ATP + H2O = nicotinate beta-D-ribonucleotide + ADP + phosphate + diphosphate. It participates in cofactor biosynthesis; NAD(+) biosynthesis; nicotinate D-ribonucleotide from nicotinate: step 1/1. Its function is as follows. Catalyzes the synthesis of beta-nicotinate D-ribonucleotide from nicotinate and 5-phospho-D-ribose 1-phosphate at the expense of ATP. This Rhizobium etli (strain ATCC 51251 / DSM 11541 / JCM 21823 / NBRC 15573 / CFN 42) protein is Nicotinate phosphoribosyltransferase.